The chain runs to 210 residues: dITP/XTP pyrophosphatase (210 aa).

13 to 18 contacts substrate; sequence THNPGK. 2 residues coordinate Mg(2+): Asp45 and Asp74. Asp74 serves as the catalytic Proton acceptor. Residues Ser75, 160-163, Lys183, and 195-196 contribute to the substrate site; these read FGYD and HR.

Belongs to the HAM1 NTPase family. In terms of assembly, homodimer. The cofactor is Mg(2+).

It catalyses the reaction XTP + H2O = XMP + diphosphate + H(+). The enzyme catalyses dITP + H2O = dIMP + diphosphate + H(+). The catalysed reaction is ITP + H2O = IMP + diphosphate + H(+). In terms of biological role, pyrophosphatase that catalyzes the hydrolysis of nucleoside triphosphates to their monophosphate derivatives, with a high preference for the non-canonical purine nucleotides XTP (xanthosine triphosphate), dITP (deoxyinosine triphosphate) and ITP. Seems to function as a house-cleaning enzyme that removes non-canonical purine nucleotides from the nucleotide pool, thus preventing their incorporation into DNA/RNA and avoiding chromosomal lesions. This is dITP/XTP pyrophosphatase from Rhodopseudomonas palustris (strain ATCC BAA-98 / CGA009).